Reading from the N-terminus, the 318-residue chain is Probable RNA methyltransferase At5g51130 (318 aa).

Disordered stretches follow at residues Met1–Val61 and Asn146–Glu184. The span at Arg16–Val34 shows a compositional bias: basic and acidic residues. The segment covering Gln37 to Gln52 has biased composition (low complexity). A Bin3-type SAM domain is found at Asp82–Lys318.

The protein belongs to the methyltransferase superfamily.

In terms of biological role, probable RNA methyltransferase. This chain is Probable RNA methyltransferase At5g51130, found in Arabidopsis thaliana (Mouse-ear cress).